The chain runs to 95 residues: Nodulin (95 aa).

The chain is Nodulin from Striga hermonthica (Purple witchweed).